A 143-amino-acid chain; its full sequence is Transcriptional regulator MraZ (143 aa).

2 SpoVT-AbrB domains span residues 5–47 (TYTP…PKEE) and 76–119 (ADEQ…DAQA).

Belongs to the MraZ family. Forms oligomers.

The protein localises to the cytoplasm. Its subcellular location is the nucleoid. The protein is Transcriptional regulator MraZ of Corynebacterium glutamicum (strain R).